A 580-amino-acid chain; its full sequence is CRISPR-associated exonuclease Cas4/endonuclease Cas1 fusion (580 aa).

The CRISPR-associated exonuclease Cas4 stretch occupies residues 1–223; that stretch reads MAPSDTPPSA…RCSLLPICLP (223 aa). Residue Cys-44 coordinates [4Fe-4S] cluster. The Mn(2+) site is built by Asp-112 and Glu-125. 3 residues coordinate [4Fe-4S] cluster: Cys-212, Cys-215, and Cys-221. Positions 248–580 are CRISPR-associated endonuclease Cas1; sequence LYGQTPGARI…IPRYPHYCPR (333 aa). Positions 401, 472, and 487 each coordinate Mn(2+).

In the N-terminal section; belongs to the CRISPR-associated exonuclease Cas4 family. It in the C-terminal section; belongs to the CRISPR-associated endonuclease Cas1 family. Homodimer, forms a heterotetramer with a Cas2 homodimer. [4Fe-4S] cluster is required as a cofactor. The cofactor is Mg(2+). It depends on Mn(2+) as a cofactor.

The enzyme catalyses exonucleolytic cleavage in the 5'- to 3'-direction to yield nucleoside 3'-phosphates.. In terms of biological role, CRISPR (clustered regularly interspaced short palindromic repeat), is an adaptive immune system that provides protection against mobile genetic elements (viruses, transposable elements and conjugative plasmids). CRISPR clusters contain spacers, sequences complementary to antecedent mobile elements, and target invading nucleic acids. CRISPR clusters are transcribed and processed into CRISPR RNA (crRNA). The Cas4 region acts as a ssDNA exonuclease, while the Cas1 region acts as a dsDNA endonuclease. Involved in the integration of spacer DNA into the CRISPR cassette. The protein is CRISPR-associated exonuclease Cas4/endonuclease Cas1 fusion (cas4-cas1) of Rhodospirillum rubrum (strain ATCC 11170 / ATH 1.1.1 / DSM 467 / LMG 4362 / NCIMB 8255 / S1).